Consider the following 408-residue polypeptide: Arginine biosynthesis bifunctional protein ArgJ 1 (408 aa).

Positions 154, 180, 191, 277, 403, and 408 each coordinate substrate. The Nucleophile role is filled by Thr-191.

This sequence belongs to the ArgJ family. As to quaternary structure, heterotetramer of two alpha and two beta chains.

The protein resides in the cytoplasm. The catalysed reaction is N(2)-acetyl-L-ornithine + L-glutamate = N-acetyl-L-glutamate + L-ornithine. It catalyses the reaction L-glutamate + acetyl-CoA = N-acetyl-L-glutamate + CoA + H(+). Its pathway is amino-acid biosynthesis; L-arginine biosynthesis; L-ornithine and N-acetyl-L-glutamate from L-glutamate and N(2)-acetyl-L-ornithine (cyclic): step 1/1. It participates in amino-acid biosynthesis; L-arginine biosynthesis; N(2)-acetyl-L-ornithine from L-glutamate: step 1/4. Functionally, catalyzes two activities which are involved in the cyclic version of arginine biosynthesis: the synthesis of N-acetylglutamate from glutamate and acetyl-CoA as the acetyl donor, and of ornithine by transacetylation between N(2)-acetylornithine and glutamate. This chain is Arginine biosynthesis bifunctional protein ArgJ 1, found in Clostridium acetobutylicum (strain ATCC 824 / DSM 792 / JCM 1419 / IAM 19013 / LMG 5710 / NBRC 13948 / NRRL B-527 / VKM B-1787 / 2291 / W).